We begin with the raw amino-acid sequence, 194 residues long: Ribonuclease HII (194 aa).

The 179-residue stretch at 16–194 (CIVAGIDEAG…PYHRRSFRCC (179 aa)) folds into the RNase H type-2 domain. 3 residues coordinate a divalent metal cation: Asp22, Glu23, and Asp113.

It belongs to the RNase HII family. The cofactor is Mn(2+). It depends on Mg(2+) as a cofactor.

Its subcellular location is the cytoplasm. It carries out the reaction Endonucleolytic cleavage to 5'-phosphomonoester.. Functionally, endonuclease that specifically degrades the RNA of RNA-DNA hybrids. This is Ribonuclease HII from Rickettsia massiliae (strain Mtu5).